We begin with the raw amino-acid sequence, 622 residues long: Solute carrier family 2, facilitated glucose transporter member 12 (622 aa).

Positions 1 to 26 (MVPVENTEGPNLLNQKGREAETEGSC) are disordered. Residues 1 to 44 (MVPVENTEGPNLLNQKGREAETEGSCGASGGGHPACAGGPSMFT) are Cytoplasmic-facing. The helical transmembrane segment at 45–65 (FLTSVTAAISGLLVGYELGLI) threads the bilayer. Residues 66 to 84 (SGALLQIRTLLALTCHEQE) lie on the Extracellular side of the membrane. A helical membrane pass occupies residues 85–105 (MVVSSLLIGAFLASLTGGVLI). The Cytoplasmic portion of the chain corresponds to 106-111 (DRYGRR). Residues 112–132 (LAIILSSCLLGLGSLVLIMSL) traverse the membrane as a helical segment. The Extracellular segment spans residues 133-141 (SYTLLIMGR). Residues 142 to 162 (VAIGVSISLSSIATCVYIAEI) form a helical membrane-spanning segment. Residues 163 to 168 (APQHRR) lie on the Cytoplasmic side of the membrane. The helical transmembrane segment at 169-189 (GLLVSLNELMIVTGILFAYIS) threads the bilayer. At 190 to 201 (NYAFANISNGWK) the chain is on the extracellular side. Asparagine 195 carries N-linked (GlcNAc...) asparagine glycosylation. Residues 202–222 (YMFGLVIPLGVLQAIAMYFLP) traverse the membrane as a helical segment. The Cytoplasmic segment spans residues 223–282 (PSPRFLVMKGQEESAGKVLRKLRVISDTTEELTLIKSSLKDEYQYSFWDLFRSKDNMRTR). Residues 283-303 (ILIGLTLVFFVQTTGQPNILF) traverse the membrane as a helical segment. The Extracellular portion of the chain corresponds to 304–321 (YASTVLKSVGFQSNEAAS). The chain crosses the membrane as a helical span at residues 322-342 (LASTGVGVVKVVSTIPATLLV). The Cytoplasmic segment spans residues 343-349 (DHIGSKT). Residues 350-370 (FLCIGSSVMSASLLTMGIVNL) traverse the membrane as a helical segment. Topologically, residues 371–471 (NINMNFTNIC…PAAYKWLSLA (101 aa)) are extracellular. 4 N-linked (GlcNAc...) asparagine glycosylation sites follow: asparagine 375, asparagine 387, asparagine 400, and asparagine 405. The helical transmembrane segment at 472-492 (SLLVYVAAFSIGLGPMPWLVL) threads the bilayer. The Cytoplasmic segment spans residues 493 to 503 (SEIFPGGIRGR). The chain crosses the membrane as a helical span at residues 504–524 (AMALTSSMNWGVNLLISLTFL). Residues 525-533 (TVTDLIGLS) are Extracellular-facing. Residues 534–554 (WVCFIYTIMSLASLAFVVLFI) form a helical membrane-spanning segment. The Cytoplasmic portion of the chain corresponds to 555 to 622 (PETKGCSLEQ…GQSQRPSPDT (68 aa)).

Belongs to the major facilitator superfamily. Sugar transporter (TC 2.A.1.1) family. Glucose transporter subfamily. As to expression, expressed in skeletal muscle, heart, brain, kidney, spleen, adipose tissues and to a lesser extent in small intestine and lung.

It localises to the cell membrane. Its subcellular location is the endomembrane system. The protein resides in the cytoplasm. It is found in the perinuclear region. It carries out the reaction D-glucose(out) = D-glucose(in). Its function is as follows. Insulin-independent facilitative glucose transporter. This is Solute carrier family 2, facilitated glucose transporter member 12 from Mus musculus (Mouse).